A 326-amino-acid polypeptide reads, in one-letter code: tRNA-modifying protein YgfZ (326 aa).

Positions 27 and 189 each coordinate folate.

It belongs to the tRNA-modifying YgfZ family.

It localises to the cytoplasm. Folate-binding protein involved in regulating the level of ATP-DnaA and in the modification of some tRNAs. It is probably a key factor in regulatory networks that act via tRNA modification, such as initiation of chromosomal replication. This Salmonella paratyphi C (strain RKS4594) protein is tRNA-modifying protein YgfZ.